A 323-amino-acid polypeptide reads, in one-letter code: L-lactate dehydrogenase (323 aa).

NAD(+)-binding residues include V12, D33, and Y65. Substrate is bound by residues R94 and 126–129 (NPCD). Residue T149 participates in NAD(+) binding. 154–157 (ETMR) is a substrate binding site. H181 acts as the Proton acceptor in catalysis. T234 is a substrate binding site.

This sequence belongs to the LDH/MDH superfamily. LDH family. In terms of assembly, homotetramer.

The protein localises to the cytoplasm. The enzyme catalyses (S)-lactate + NAD(+) = pyruvate + NADH + H(+). It functions in the pathway fermentation; pyruvate fermentation to lactate; (S)-lactate from pyruvate: step 1/1. Catalyzes the conversion of lactate to pyruvate. The protein is L-lactate dehydrogenase of Mycoplasmoides gallisepticum (strain R(low / passage 15 / clone 2)) (Mycoplasma gallisepticum).